The chain runs to 852 residues: MSEEIREVKVLEKPWVEKYRPQRLDDIVGQEHIVKRLKHYVKTGSMPHLLFAGPPGVGKCLTGDTKVIANGQLFELGELVEKLSGGRFGPTPVKGLKVLGIDEDGKLREFEVQYVYKDRTDRLIKIKTQLGRELKVTPYHPLLVNRENGEIKWIKAEELKPGDKLAIPSFLPLITGENPLAEWLGYFMGSGYAYPSNSVITFTNEDPLIRQRFMELTEKLFPDAKIRERIHADGTPEVYVVSRKAWSLVNSISLTLIPREGWKGIRSFLRAYSDCNGRIESDAIVLSTDNNDMAQQIAYALASFGIIAKMDGEDVIISGSDNIERFLNEIGFSTQSKLKEAQKLIRKTNVRSDGLKINYELISYVKDRLRLNVNDKRNLSYRNAKELSWELMKEIYYRLEELERLKKVLSEPILIDWNEVAKKSDEVIEKAKIRAEKLLEYIKGERKPSFKEYIEIAKVLGINVERTIEAMKIFAKRYSSYAEIGRKLGTWNFNVKTILESDTVDNVEILEKIRKIELELIEEILSDGKLKEGIAYLIFLFQNELYWDEITEVKELRGDFIIYDLHVPGYHNFIAGNMPTVVHNTTAALALARELFGENWRHNFLELNASDERGINVIREKVKEFARTKPIGGASFKIIFLDEADALTQDAQQALRRTMEMFSSNVRFILSCNYSSKIIEPIQSRCAIFRFRPLRDEDIAKRLRYIAENEGLELTEEGLQAILYIAEGDMRRAINILQAAAALDKKITDENVFMVASRARPEDIREMMLLALKGNFLKAREKLREILLKQGLSGEDVLVQMHKEVFNLPIEEPKKVLLADKIGEYNFRLVEGANEIIQLEALLAQFTLIGKK.

A DOD-type homing endonuclease domain is found at 183-306; the sequence is WLGYFMGSGY…IAYALASFGI (124 aa).

Belongs to the activator 1 small subunits family. RfcS subfamily. Heteromultimer composed of three to four small subunits (RfcS) and one to two large subunits (RfcL). This protein undergoes a protein self splicing that involves a post-translational excision of the intervening region (intein) followed by peptide ligation.

Part of the RFC clamp loader complex which loads the PCNA sliding clamp onto DNA. The complex possesses DNA-dependent ATPase activity which is further stimulated by PCNA. In Pyrococcus furiosus (strain ATCC 43587 / DSM 3638 / JCM 8422 / Vc1), this protein is Replication factor C small subunit (rfcS).